The primary structure comprises 139 residues: Putative pre-16S rRNA nuclease (139 aa).

Belongs to the YqgF nuclease family.

It localises to the cytoplasm. Its function is as follows. Could be a nuclease involved in processing of the 5'-end of pre-16S rRNA. The protein is Putative pre-16S rRNA nuclease of Streptococcus pyogenes serotype M1.